The sequence spans 299 residues: 4-diphosphocytidyl-2-C-methyl-D-erythritol kinase (299 aa).

Lys-16 is a catalytic residue. Residue 97-107 coordinates ATP; it reads PVASGIGGGSA. Asp-140 is an active-site residue.

This sequence belongs to the GHMP kinase family. IspE subfamily.

It catalyses the reaction 4-CDP-2-C-methyl-D-erythritol + ATP = 4-CDP-2-C-methyl-D-erythritol 2-phosphate + ADP + H(+). Its pathway is isoprenoid biosynthesis; isopentenyl diphosphate biosynthesis via DXP pathway; isopentenyl diphosphate from 1-deoxy-D-xylulose 5-phosphate: step 3/6. Its function is as follows. Catalyzes the phosphorylation of the position 2 hydroxy group of 4-diphosphocytidyl-2C-methyl-D-erythritol. The chain is 4-diphosphocytidyl-2-C-methyl-D-erythritol kinase from Roseobacter denitrificans (strain ATCC 33942 / OCh 114) (Erythrobacter sp. (strain OCh 114)).